The chain runs to 116 residues: MLQYIPLSNLPYSHIPLHHPSLTISTKCTRIIMHGTCLSGLYPVPFTHKVHHYPHFNIYISFGDPKYCITALNTYVIPLLHHILTTQFIHTYFNIPTKSPPKSPKHKNYLSFNFTK.

This sequence belongs to the UPF0320 family.

This Saccharomyces cerevisiae (strain ATCC 204508 / S288c) (Baker's yeast) protein is Putative UPF0320 protein YLL065W.